We begin with the raw amino-acid sequence, 423 residues long: Histidine--tRNA ligase (423 aa).

This sequence belongs to the class-II aminoacyl-tRNA synthetase family. Homodimer.

The protein localises to the cytoplasm. It carries out the reaction tRNA(His) + L-histidine + ATP = L-histidyl-tRNA(His) + AMP + diphosphate + H(+). In Mycobacterium bovis (strain ATCC BAA-935 / AF2122/97), this protein is Histidine--tRNA ligase (hisS).